The sequence spans 467 residues: 3-isopropylmalate dehydratase large subunit (467 aa).

The [4Fe-4S] cluster site is built by cysteine 349, cysteine 409, and cysteine 412.

It belongs to the aconitase/IPM isomerase family. LeuC type 1 subfamily. In terms of assembly, heterodimer of LeuC and LeuD. It depends on [4Fe-4S] cluster as a cofactor.

The catalysed reaction is (2R,3S)-3-isopropylmalate = (2S)-2-isopropylmalate. The protein operates within amino-acid biosynthesis; L-leucine biosynthesis; L-leucine from 3-methyl-2-oxobutanoate: step 2/4. Its function is as follows. Catalyzes the isomerization between 2-isopropylmalate and 3-isopropylmalate, via the formation of 2-isopropylmaleate. This is 3-isopropylmalate dehydratase large subunit from Vibrio cholerae serotype O1 (strain ATCC 39541 / Classical Ogawa 395 / O395).